A 169-amino-acid chain; its full sequence is Large ribosomal subunit protein uL5 (169 aa).

It belongs to the universal ribosomal protein uL5 family. In terms of assembly, part of the 50S ribosomal subunit; contacts the 5S rRNA and probably tRNA. Forms a bridge to the 30S subunit in the 70S ribosome.

Functionally, this is one of the proteins that bind and probably mediate the attachment of the 5S RNA into the large ribosomal subunit, where it forms part of the central protuberance. In the 70S ribosome it contacts protein S13 of the 30S subunit (bridge B1b), connecting the 2 subunits; this bridge is implicated in subunit movement. May contact the P site tRNA; the 5S rRNA and some of its associated proteins might help stabilize positioning of ribosome-bound tRNAs. This chain is Large ribosomal subunit protein uL5, found in Cenarchaeum symbiosum (strain A).